Consider the following 76-residue polypeptide: Omega-conotoxin-like TxMKLT1-0141 (76 aa).

The first 22 residues, 1-22 (MKLTCMMIVAVLFLTAWTFATA), serve as a signal peptide directing secretion. The propeptide occupies 23–50 (DDSSNGLENLFPKAHHEMKNPEASKLNE). Intrachain disulfides connect Cys-52–Cys-67, Cys-59–Cys-70, and Cys-66–Cys-75.

It belongs to the conotoxin O1 superfamily. Expressed by the venom duct.

The protein resides in the secreted. Omega-conotoxins act at presynaptic membranes, they bind and block voltage-gated calcium channels (Cav). In Conus textile (Cloth-of-gold cone), this protein is Omega-conotoxin-like TxMKLT1-0141.